We begin with the raw amino-acid sequence, 527 residues long: Putative ABC transporter peptide-binding protein BMEII0859 (527 aa).

Positions 1 to 23 are cleaved as a signal peptide; that stretch reads MRLRNFYSALALSAAVFAGPLYA.

This sequence belongs to the bacterial solute-binding protein 5 family. In terms of assembly, the complex is composed of two ATP-binding proteins (BMEII0863 and BMEII0864), two transmembrane proteins (BMEII0860 and BMEII0861) and a solute-binding protein (BMEII0859).

The protein localises to the periplasm. Its function is as follows. Probably part of an ABC transporter complex that could be involved in peptide import. The sequence is that of Putative ABC transporter peptide-binding protein BMEII0859 from Brucella melitensis biotype 1 (strain ATCC 23456 / CCUG 17765 / NCTC 10094 / 16M).